Consider the following 782-residue polypeptide: Protein PAT1 homolog 1 (782 aa).

4 disordered regions span residues 96-153 (GPKH…HSKP), 177-217 (LPES…YSAP), 332-372 (VREH…SKHM), and 460-481 (EVDS…GKHL). The segment covering 108–117 (SGSFSRESSS) has biased composition (low complexity). Over residues 208 to 217 (GGSQLTYSAP) the composition is skewed to polar residues. The span at 335-347 (HKHKSSHRSRKNR) shows a compositional bias: basic residues. Polar residues predominate over residues 348-366 (GLSQQTSDAASQKSETGLQ). Over residues 471–481 (SGDHKGSGKHL) the composition is skewed to basic and acidic residues.

As to quaternary structure, interacts with AFPH2/NINJA. As to expression, expressed in root vasculature, shoot apical meristem (SAM) and leaves.

In terms of biological role, activator of mRNA decapping. Involved in mRNA decay via decapping. Involved in the regulation of root stem cell niche identity. Maintains root stem cell niche stability through the interaction with the negative regulator of jasmonate signaling AFPH2/NINJA, and the regulation of cell division. This Arabidopsis thaliana (Mouse-ear cress) protein is Protein PAT1 homolog 1.